The following is a 405-amino-acid chain: 11-beta-hydroxysteroid dehydrogenase type 2 (405 aa).

82 to 111 contacts NAD(+); sequence TRAVLITGCDSGFGKETAKKLDSMGFTVLA. Residue serine 219 coordinates substrate. Tyrosine 232 acts as the Proton acceptor in catalysis. The interval 335 to 339 is essential for protein stability; that stretch reads RRRYY. Residues 377 to 387 show a composition bias toward low complexity; the sequence is QPGQPGTTPPQ. A disordered region spans residues 377-405; that stretch reads QPGQPGTTPPQDAAQDPNLSPGPSPAVAR. The segment covering 396-405 has biased composition (pro residues); the sequence is SPGPSPAVAR.

This sequence belongs to the short-chain dehydrogenases/reductases (SDR) family. In terms of assembly, interacts with ligand-free cytoplasmic NR3C2. As to expression, expressed in kidney, placenta, pancreas, prostate, ovary, small intestine and colon, and in lower levels in the spleen and testis. At midgestation, expressed at high levels in placenta and in fetal kidney and, at much lower levels, in fetal lung and testis.

The protein localises to the microsome. The protein resides in the endoplasmic reticulum. It carries out the reaction an 11beta-hydroxysteroid + NAD(+) = an 11-oxosteroid + NADH + H(+). The catalysed reaction is cortisol + NAD(+) = cortisone + NADH + H(+). The enzyme catalyses corticosterone + NAD(+) = 11-dehydrocorticosterone + NADH + H(+). It catalyses the reaction 11beta,17beta-dihydroxyandrost-4-ene-3-one + NAD(+) = 17beta-hydroxyandrost-4-ene-3,11-dione + NADH + H(+). It carries out the reaction 11beta-hydroxyandrost-4-ene-3,17-dione + NAD(+) = androst-4-ene-3,11,17-trione + NADH + H(+). Its pathway is steroid metabolism. Inhibited by glycyrrhetinic acid (derived from liquorice). Its function is as follows. Catalyzes the conversion of biologically active 11beta-hydroxyglucocorticoids (11beta-hydroxysteroid) such as cortisol, to inactive 11-ketoglucocorticoids (11-oxosteroid) such as cortisone, in the presence of NAD(+). Functions as a dehydrogenase (oxidase), thereby decreasing the concentration of active glucocorticoids, thus protecting the nonselective mineralocorticoid receptor from occupation by glucocorticoids. Plays an important role in maintaining glucocorticoids balance during preimplantation and protects the fetus from excessive maternal corticosterone exposure. Catalyzes the oxidation of 11beta-hydroxytestosterone (11beta,17beta-dihydroxyandrost-4-ene-3-one) to 11-ketotestosterone (17beta-hydroxyandrost-4-ene-3,11-dione), a major bioactive androgen. Catalyzes the conversion of 11beta-hydroxyandrostenedione (11beta-hydroxyandrost-4-ene-3,17-dione) to 11-ketoandrostenedione (androst-4-ene-3,11,17-trione), which can be further metabolized to 11-ketotestosterone. Converts 7-beta-25-dihydroxycholesterol to 7-oxo-25-hydroxycholesterol in vitro. 7-beta-25-dihydroxycholesterol (not 7-oxo-25-hydroxycholesterol) acts as a ligand for the G-protein-coupled receptor (GPCR) Epstein-Barr virus-induced gene 2 (EBI2) and may thereby regulate immune cell migration. May protect ovulating oocytes and fertilizing spermatozoa from the adverse effects of cortisol. In Homo sapiens (Human), this protein is 11-beta-hydroxysteroid dehydrogenase type 2.